Here is a 321-residue protein sequence, read N- to C-terminus: GTP 3',8-cyclase (321 aa).

The Radical SAM core domain maps to 5–233; it reads SFNRVIDYIR…QGSSKIYTLE (229 aa). Residue R14 participates in GTP binding. 2 residues coordinate [4Fe-4S] cluster: C21 and C25. Y27 is a binding site for S-adenosyl-L-methionine. C28 is a binding site for [4Fe-4S] cluster. R64 is a GTP binding site. G68 is an S-adenosyl-L-methionine binding site. GTP is bound at residue S95. S119 serves as a coordination point for S-adenosyl-L-methionine. Residue K155 coordinates GTP. S-adenosyl-L-methionine is bound at residue M189. [4Fe-4S] cluster contacts are provided by C249 and C252. 254–256 provides a ligand contact to GTP; sequence RIR. Position 266 (C266) interacts with [4Fe-4S] cluster.

Belongs to the radical SAM superfamily. MoaA family. As to quaternary structure, monomer and homodimer. Requires [4Fe-4S] cluster as cofactor.

The enzyme catalyses GTP + AH2 + S-adenosyl-L-methionine = (8S)-3',8-cyclo-7,8-dihydroguanosine 5'-triphosphate + 5'-deoxyadenosine + L-methionine + A + H(+). Its pathway is cofactor biosynthesis; molybdopterin biosynthesis. Its function is as follows. Catalyzes the cyclization of GTP to (8S)-3',8-cyclo-7,8-dihydroguanosine 5'-triphosphate. In Helicobacter pylori (strain HPAG1), this protein is GTP 3',8-cyclase.